The primary structure comprises 542 residues: Propane 2-monooxygenase, hydroxylase component large subunit (542 aa).

Glu-97, Glu-127, His-130, Glu-192, Glu-226, and His-229 together coordinate Fe cation.

The protein belongs to the TmoA/XamoA family. In terms of assembly, the propane 2-monooxygenase multicomponent enzyme system is composed of an electron transfer component and a monooxygenase component interacting with the effector protein MimD. The electron transfer component is composed of a reductase (MimB), and the monooxygenase component is formed by a large subunit (MimA) and a small subunit (MimC). Requires the presence of the chaperonin-like protein MimG to ensure a productive folding, resulting of a soluble MimA, which leads to the active form of MimABCD. The cofactor is Fe(2+).

It carries out the reaction propane + NADH + O2 + H(+) = propan-2-ol + NAD(+) + H2O. It catalyses the reaction acetone + NADH + O2 + H(+) = hydroxyacetone + NAD(+) + H2O. The catalysed reaction is butan-2-one + NADH + O2 + H(+) = 1-hydroxy-2-butanone + NAD(+) + H2O. The enzyme catalyses phenol + NADH + O2 + H(+) = hydroquinone + NAD(+) + H2O. Component of the propane 2-monooxygenase multicomponent enzyme system which is involved in the degradation of propane via the O2-dependent hydroxylation of propane. Also involved in the degradation of acetone via the O2-dependent hydroxylation of acetone. Also able to catalyze the oxidation of phenol, methylethylketone (2-butanone), 1-propanol and 2-propanol. The chain is Propane 2-monooxygenase, hydroxylase component large subunit from Mycolicibacterium smegmatis (strain ATCC 700084 / mc(2)155) (Mycobacterium smegmatis).